Reading from the N-terminus, the 165-residue chain is Lipoprotein signal peptidase (165 aa).

A run of 3 helical transmembrane segments spans residues 12-32 (WLWV…LILQ), 70-90 (WFFA…MYRS), and 102-122 (ALII…GFVV). Residues D123 and D141 contribute to the active site. The helical transmembrane segment at 137-157 (FNLADSAICIGAALIVLEGFL) threads the bilayer.

This sequence belongs to the peptidase A8 family.

It localises to the cell inner membrane. It catalyses the reaction Release of signal peptides from bacterial membrane prolipoproteins. Hydrolyzes -Xaa-Yaa-Zaa-|-(S,diacylglyceryl)Cys-, in which Xaa is hydrophobic (preferably Leu), and Yaa (Ala or Ser) and Zaa (Gly or Ala) have small, neutral side chains.. It functions in the pathway protein modification; lipoprotein biosynthesis (signal peptide cleavage). Its function is as follows. This protein specifically catalyzes the removal of signal peptides from prolipoproteins. In Klebsiella aerogenes (strain ATCC 13048 / DSM 30053 / CCUG 1429 / JCM 1235 / KCTC 2190 / NBRC 13534 / NCIMB 10102 / NCTC 10006 / CDC 819-56) (Enterobacter aerogenes), this protein is Lipoprotein signal peptidase.